The following is a 137-amino-acid chain: MKLNLYVLTPKRIIWDCEVKEIILSTNSGQIGVLPNHAPINTAVDMGPLRIRLLNDQWLTAVLWSGFARIVNNEIIILGNDAELGSDIDPEEAQQALEIAEANLSKAEGTKELVEAKLALRRARIRVEAVNWIPPSN.

Belongs to the ATPase epsilon chain family. As to quaternary structure, F-type ATPases have 2 components, CF(1) - the catalytic core - and CF(0) - the membrane proton channel. CF(1) has five subunits: alpha(3), beta(3), gamma(1), delta(1), epsilon(1). CF(0) has three main subunits: a, b and c.

Its subcellular location is the plastid. The protein resides in the chloroplast thylakoid membrane. Functionally, produces ATP from ADP in the presence of a proton gradient across the membrane. The chain is ATP synthase epsilon chain, chloroplastic from Sorghum bicolor (Sorghum).